Here is a 165-residue protein sequence, read N- to C-terminus: Plastocyanin, chloroplastic (165 aa).

A chloroplast-targeting transit peptide spans 1–66 (MATVTSSAAV…AGILAGNAMA (66 aa)). The Plastocyanin-like domain maps to 67–165 (AEVLLGSSDG…AGMVGKVTVN (99 aa)). Residues H103, C150, H153, and M158 each contribute to the Cu cation site.

Belongs to the plastocyanin family. Requires Cu(2+) as cofactor.

Its subcellular location is the plastid. It localises to the chloroplast thylakoid membrane. Participates in electron transfer between P700 and the cytochrome b6-f complex in photosystem I. The protein is Plastocyanin, chloroplastic (PETE) of Silene latifolia subsp. alba (White campion).